Here is a 770-residue protein sequence, read N- to C-terminus: MNANQAAESNLLASNQQKELEDLPKDYPLSTSEDEGDKDEERKHQKLLESISSLNGKDRQKLADRSEASLKVSEFSVSSEGSGEKLVLSDLLEPVKTSSSLAAVKKQLNRVKSKKTVELPLHREEIERIHREVAFNKSSQILSKWDPVVLKNRQAEQLVFPLSKPQSAFAPIEHVVNGWKAGTPLEQEIFNLLHKNKQPVTDPLLTPVEKASLKAMSLEEVKMRRAELQRARALQSYYEARARREKRIKSKKYHRILKKGKAKQALKDFEKLQKVNPAAALEELEKLDKARMMERMSLKHQNSGKWAKSKAIMAKYDLEARQAMQEQLARNKELTQKVRAASESEEEGEGQEEEEEPLVPDLVNEVQIKANGLNPWMFRNHFIDAKEAEVQKDLEDPAEPEAQETSESEEEKAVVEEETLLKEFEERRSLRQKSELNHMAEPVHRRVTKDPSSQEVLSDLRALCQKLRTENHQSGKQELSSARTAQREEPAREEEEPMLLQRPERARTLDELEELGREGCVENEELPRTAVEGLQLEKNLSNHIGAPKEKKRKEQMIDLQNLLTTKSPSVKSLAVPTTVQELEDEEERDQRQIIKEAFAGDDVIRDFLKEKREAVEASKPKDLDLTLPGWGEWGGIGLKPSAKKRRRFLIKAPEGPPRKDKNLPNVIINEKRNTHAAAHQVQVLPHPFTHHQQFERTIQTPVGSTWNTQRAFQKLTMPKVVTKPGHIIKPIKAEDVGYRSSSRSDLSVVQRNPKRLSIRHKKHLENNCVD.

Residues 1 to 17 (MNANQAAESNLLASNQQ) are compositionally biased toward polar residues. Residues 1–65 (MNANQAAESN…GKDRQKLADR (65 aa)) are disordered. A phosphoserine mark is found at S30, S32, and S53. Residues 41-68 (ERKHQKLLESISSLNGKDRQKLADRSEA) adopt a coiled-coil conformation. Residues 56–65 (GKDRQKLADR) show a composition bias toward basic and acidic residues. S78 and S82 each carry phosphoserine. A Phosphothreonine modification is found at T206. Coiled coils occupy residues 217–291 (SLEE…DKAR) and 318–348 (LEAR…EEEG). Disordered stretches follow at residues 334-361 (LTQK…LVPD), 392-455 (KDLE…SSQE), and 467-505 (LRTE…RPER). 2 stretches are compositionally biased toward acidic residues: residues 343-358 (ESEE…EEPL) and 396-410 (DPAE…ESEE). Residues S406 and S408 each carry the phosphoserine modification. The segment covering 411–444 (EKAVVEEETLLKEFEERRSLRQKSELNHMAEPVH) has biased composition (basic and acidic residues). K449 is covalently cross-linked (Glycyl lysine isopeptide (Lys-Gly) (interchain with G-Cter in SUMO2)). S453 carries the phosphoserine modification. Phosphoserine is present on S567. R588 is subject to Citrulline. K732 participates in a covalent cross-link: Glycyl lysine isopeptide (Lys-Gly) (interchain with G-Cter in SUMO2).

This sequence belongs to the UTP14 family. In terms of assembly, interacts with DHX37. Citrullinated by PADI4.

The protein localises to the nucleus. The protein resides in the nucleolus. Functionally, may be required for ribosome biogenesis. The protein is U3 small nucleolar RNA-associated protein 14 homolog A (UTP14A) of Bos taurus (Bovine).